The chain runs to 188 residues: Elongation factor P (188 aa).

Belongs to the elongation factor P family.

It localises to the cytoplasm. It functions in the pathway protein biosynthesis; polypeptide chain elongation. Involved in peptide bond synthesis. Stimulates efficient translation and peptide-bond synthesis on native or reconstituted 70S ribosomes in vitro. Probably functions indirectly by altering the affinity of the ribosome for aminoacyl-tRNA, thus increasing their reactivity as acceptors for peptidyl transferase. This Bacteroides fragilis (strain ATCC 25285 / DSM 2151 / CCUG 4856 / JCM 11019 / LMG 10263 / NCTC 9343 / Onslow / VPI 2553 / EN-2) protein is Elongation factor P.